The following is an 81-amino-acid chain: ATP synthase subunit c (81 aa).

2 helical membrane-spanning segments follow: residues 6–26 and 57–77; these read AAASVIAAALAVGLGAIGPGI and LAFMESLTIYGLVIALVLLFA.

The protein belongs to the ATPase C chain family. As to quaternary structure, F-type ATPases have 2 components, F(1) - the catalytic core - and F(0) - the membrane proton channel. F(1) has five subunits: alpha(3), beta(3), gamma(1), delta(1), epsilon(1). F(0) has four main subunits: a(1), b(1), b'(1) and c(10-14). The alpha and beta chains form an alternating ring which encloses part of the gamma chain. F(1) is attached to F(0) by a central stalk formed by the gamma and epsilon chains, while a peripheral stalk is formed by the delta, b and b' chains.

The protein resides in the cellular thylakoid membrane. Functionally, f(1)F(0) ATP synthase produces ATP from ADP in the presence of a proton or sodium gradient. F-type ATPases consist of two structural domains, F(1) containing the extramembraneous catalytic core and F(0) containing the membrane proton channel, linked together by a central stalk and a peripheral stalk. During catalysis, ATP synthesis in the catalytic domain of F(1) is coupled via a rotary mechanism of the central stalk subunits to proton translocation. Its function is as follows. Key component of the F(0) channel; it plays a direct role in translocation across the membrane. A homomeric c-ring of between 10-14 subunits forms the central stalk rotor element with the F(1) delta and epsilon subunits. In Synechocystis sp. (strain ATCC 27184 / PCC 6803 / Kazusa), this protein is ATP synthase subunit c.